Reading from the N-terminus, the 116-residue chain is Large ribosomal subunit protein bL19 (116 aa).

Belongs to the bacterial ribosomal protein bL19 family.

Its function is as follows. This protein is located at the 30S-50S ribosomal subunit interface and may play a role in the structure and function of the aminoacyl-tRNA binding site. The sequence is that of Large ribosomal subunit protein bL19 from Fusobacterium nucleatum subsp. nucleatum (strain ATCC 25586 / DSM 15643 / BCRC 10681 / CIP 101130 / JCM 8532 / KCTC 2640 / LMG 13131 / VPI 4355).